A 1486-amino-acid polypeptide reads, in one-letter code: Collagen alpha-1(II) chain (1486 aa).

A signal peptide spans 1 to 26; the sequence is MFSFVDSRTLVLFAATQVILLAVVRC. A propeptide spans 27-183 (N-terminal propeptide); sequence QDEEDVLDTG…PPGLGGNFAA (157 aa). One can recognise a VWFC domain in the interval 36–94; sequence GSCVQHGQRYSDKDVWKPEPCQICVCDTGTVLCDDIICEESKDCPNAEIPFGECCPICP. The segment at 100–1241 is disordered; sequence TSSGQGVLKG…EKGPDPMRYM (1142 aa). 2 stretches are compositionally biased toward basic and acidic residues: residues 110 to 121 and 138 to 159; these read QKGEPGDIKDVL and SRGE…RDGE. A compositionally biased stretch (pro residues) spans 163–175; the sequence is PGNPGPVGPPGPP. The segment covering 194–205 has biased composition (low complexity); that stretch reads GGAQMGVMQGPM. The tract at residues 203-1216 is triple-helical region; it reads GPMGPMGPRG…PGPPGPPGPP (1014 aa). The span at 210 to 219 shows a compositional bias: pro residues; the sequence is PRGPPGPTGA. Positions 220 to 231 are enriched in low complexity; that stretch reads PGPQGFQGNPGE. Residues 233 to 242 are compositionally biased toward gly residues; sequence GEPGAGGPMG. Residues 253 to 267 show a composition bias toward basic and acidic residues; that stretch reads PGDDGEAGKPGKSGE. A compositionally biased stretch (gly residues) spans 308 to 317; that stretch reads GAKGEGGATG. 4 stretches are compositionally biased toward low complexity: residues 318-330, 337-346, 363-373, and 393-421; these read EAGS…PRGL, PGSSGAAGAR, PAGAPGFPGAP, and PRGE…PGAK. Residues 422–431 are compositionally biased toward gly residues; it reads GSSGGPGIAG. Residues 435 to 444 are compositionally biased toward pro residues; it reads FPGPRGPPGP. Low complexity-rich tracts occupy residues 478–487 and 498–517; these read AGPQGAPGPA and EPGA…PGNR. Over residues 536-551 the composition is skewed to gly residues; it reads GVPGLGGPKGGNGDPG. 4-hydroxyproline is present on residues P661 and P670. P672 is subject to 3-hydroxyproline. P673 and P676 each carry 4-hydroxyproline. Over residues 708–732 the composition is skewed to low complexity; that stretch reads ERGSSGPQGLQGPRGLPGTPGTDGP. Positions 766–777 are enriched in basic and acidic residues; the sequence is KGDRGDTGEKGP. Residues 891-904 are compositionally biased toward low complexity; the sequence is AQGPAGATGFPGAA. 3 positions are modified to 4-hydroxyproline: P910, P916, and P922. Pro residues predominate over residues 913–922; that stretch reads NGNPGPPGPP. The span at 936 to 955 shows a compositional bias: low complexity; that stretch reads DAGPPGRAGDPGLQGAAGAP. The segment covering 1007–1016 has biased composition (gly residues); it reads GKQGGPGSSG. Residues 1102–1116 are compositionally biased toward low complexity; sequence SGPAGARGLAGPQGP. A compositionally biased stretch (basic and acidic residues) spans 1117–1131; it reads RGDKGEAGEAGERGQ. P1146 carries the 3-hydroxyproline modification. A compositionally biased stretch (low complexity) spans 1150-1159; sequence AGDQGATGPA. A 3-hydroxyproline modification is found at P1188. P1189 bears the 4-hydroxyproline mark. Over residues 1201 to 1218 the composition is skewed to pro residues; sequence SGPPGQPGPPGPPGPPGP. P1203 is subject to 3-hydroxyproline. A 4-hydroxyproline mark is found at P1204 and P1207. P1209 carries the 3-hydroxyproline modification. Residues P1210 and P1213 each carry the 4-hydroxyproline modification. P1215 is subject to 3-hydroxyproline. P1216 carries the 4-hydroxyproline modification. The tract at residues 1217–1243 is nonhelical region (C-terminal); sequence GPGIDMSAFAGLSQPEKGPDPMRYMRA. The propeptide at 1244 to 1486 is C-terminal propeptide; it reads DQASNSLPVD…GVDIGPVCFL (243 aa). The Fibrillar collagen NC1 domain occupies 1252–1486; the sequence is VDVEATLKSL…GVDIGPVCFL (235 aa). Disulfide bonds link C1282–C1314, C1322–C1484, and C1392–C1437. The Ca(2+) site is built by D1300, N1302, Q1303, C1305, and D1308. N1387 carries N-linked (GlcNAc...) asparagine glycosylation.

The protein belongs to the fibrillar collagen family. As to quaternary structure, homotrimers of alpha 1(II) chains. Post-translationally, contains mostly 4-hydroxyproline. Prolines at the third position of the tripeptide repeating unit (G-X-P) are 4-hydroxylated in some or all of the chains. Contains 3-hydroxyproline at a few sites. This modification occurs on the first proline residue in the sequence motif Gly-Pro-Hyp, where Hyp is 4-hydroxyproline. In terms of processing, lysine residues at the third position of the tripeptide repeating unit (G-X-Y) are 5-hydroxylated in some or all of the chains. Post-translationally, O-glycosylated on hydroxylated lysine residues. The O-linked glycan consists of a Glc-Gal disaccharide.

It localises to the secreted. Its subcellular location is the extracellular space. The protein resides in the extracellular matrix. Its function is as follows. Type II collagen is specific for cartilaginous tissues. It is essential for the normal embryonic development of the skeleton, for linear growth and for the ability of cartilage to resist compressive forces. This is Collagen alpha-1(II) chain from Xenopus laevis (African clawed frog).